An 867-amino-acid chain; its full sequence is Bifunctional isopimaradiene synthase, chloroplastic (867 aa).

The N-terminal 68 residues, 1–68 (MALLSSSLSS…VGEGTTSLPY (68 aa)), are a transit peptide targeting the chloroplast. Lys267 contacts substrate. Mg(2+) is bound by residues Asp400 and Asp402. A DXDD motif motif is present at residues 400-403 (DIDD). Substrate is bound at residue Lys487. Positions 619, 623, 763, 767, and 771 each coordinate Mg(2+). Residues 619–623 (DDLYD) carry the DDXXD motif motif.

Belongs to the terpene synthase family. Tpsd subfamily. The cofactor is Mg(2+).

The protein resides in the plastid. It is found in the chloroplast. The enzyme catalyses (2E,6E,10E)-geranylgeranyl diphosphate = (+)-copalyl diphosphate. The catalysed reaction is (+)-copalyl diphosphate = isopimara-7,15-diene + diphosphate. It functions in the pathway terpene metabolism; oleoresin biosynthesis. In terms of biological role, involved in defensive oleoresin formation in conifers in response to insect attack or other injury. Involved in diterpene (C20) olefins biosynthesis. Bifunctional enzyme that catalyzes two sequential cyclizations of geranylgeranyl diphosphate (GGPP) to isopimara-7,15-diene. This is Bifunctional isopimaradiene synthase, chloroplastic (TPS-ISO) from Picea abies (Norway spruce).